The chain runs to 188 residues: Adenine phosphoribosyltransferase (188 aa).

This sequence belongs to the purine/pyrimidine phosphoribosyltransferase family. As to quaternary structure, homodimer.

It localises to the cytoplasm. It carries out the reaction AMP + diphosphate = 5-phospho-alpha-D-ribose 1-diphosphate + adenine. It functions in the pathway purine metabolism; AMP biosynthesis via salvage pathway; AMP from adenine: step 1/1. Its function is as follows. Catalyzes a salvage reaction resulting in the formation of AMP, that is energically less costly than de novo synthesis. The sequence is that of Adenine phosphoribosyltransferase from Burkholderia cenocepacia (strain HI2424).